A 466-amino-acid chain; its full sequence is MTTLDSILAGRYPAKAHARRVAERLQVGGSGRNGIIYLEAQKTRLIEDNDEAMHFRQRRPFFYLSGCPLPDSSLIYNIASDKLTLFIPPIDPEDVIWSGLPMSVAEALRLYDVDQVLHTTDVNATLASIASDGNGKSVAFAIEGQITEGIKFDGFLETNTSVLKGAIDSTRVVKDEYEIALLRKANDISAKAHIAAIEASKTATNEREIEAAFLATCIANGARDQAYHPIVACGQNGATLHYGRNDDDLVDPVTKAGKSSVLIDAGAEYRTYCADITRVFPLGGRFTSETQEIYKIVLQMQLEAIAMLKENVQWEDVHAHAHRIAIKGLLKLGILRGSEDELFEKRISVAFFPHGLGHYLGMDTHDTGGNPNYADKDTMFKYLRVRGRLPAGSVITVEPGIYFCRFIIEPYLTSPETSKYIDTNVLEKYWNVGGVRIEDNVHVTQQGYENLTTAPKAIEEVEVLAT.

The Mn(2+) site is built by D264, D275, E398, and E438.

It belongs to the peptidase M24B family. Mn(2+) serves as cofactor.

It carries out the reaction Release of any N-terminal amino acid, including proline, that is linked to proline, even from a dipeptide or tripeptide.. Its function is as follows. Catalyzes the removal of a penultimate prolyl residue from the N-termini of peptides. The sequence is that of Probable Xaa-Pro aminopeptidase pepP (pepP) from Aspergillus niger (strain ATCC MYA-4892 / CBS 513.88 / FGSC A1513).